A 611-amino-acid chain; its full sequence is DNA mismatch repair protein MutL (611 aa).

This sequence belongs to the DNA mismatch repair MutL/HexB family.

Its function is as follows. This protein is involved in the repair of mismatches in DNA. It is required for dam-dependent methyl-directed DNA mismatch repair. May act as a 'molecular matchmaker', a protein that promotes the formation of a stable complex between two or more DNA-binding proteins in an ATP-dependent manner without itself being part of a final effector complex. This is DNA mismatch repair protein MutL from Bartonella bacilliformis (strain ATCC 35685 / KC583 / Herrer 020/F12,63).